Consider the following 202-residue polypeptide: Na(+)-translocating NADH-quinone reductase subunit E (202 aa).

6 helical membrane passes run 11–31 (AVFVENMALAFFLGMCTFIAI), 35–55 (VETAIGLGIAVIVVQTITVPA), 81–101 (FLGLLSYIGVIAAIVQILEML), 114–134 (GVFLPLITVNCAIMAGSLFMV), 144–164 (TVYGVGSGFSWALAIAALAGI), and 180–200 (LGITFITIGLMSLGFMSFSGV).

Belongs to the NqrDE/RnfAE family. In terms of assembly, composed of six subunits; NqrA, NqrB, NqrC, NqrD, NqrE and NqrF.

It localises to the cell inner membrane. The enzyme catalyses a ubiquinone + n Na(+)(in) + NADH + H(+) = a ubiquinol + n Na(+)(out) + NAD(+). Functionally, NQR complex catalyzes the reduction of ubiquinone-1 to ubiquinol by two successive reactions, coupled with the transport of Na(+) ions from the cytoplasm to the periplasm. NqrA to NqrE are probably involved in the second step, the conversion of ubisemiquinone to ubiquinol. The chain is Na(+)-translocating NADH-quinone reductase subunit E from Pseudomonas aeruginosa (strain LESB58).